The chain runs to 473 residues: Protein translocase subunit SecD (473 aa).

A run of 6 helical transmembrane segments spans residues 5 to 25 (VLVK…LLYP), 316 to 336 (ASLY…KSGG), 337 to 357 (IISN…MAAF), 364 to 384 (PGIA…VLIL), 409 to 429 (WSAI…LFQF), and 436 to 456 (GFAV…VFVT).

This sequence belongs to the SecD/SecF family. SecD subfamily. As to quaternary structure, forms a complex with SecF. Part of the essential Sec protein translocation apparatus which comprises SecA, SecYEG and auxiliary proteins SecDF. Other proteins may also be involved.

The protein resides in the cell inner membrane. Functionally, part of the Sec protein translocase complex. Interacts with the SecYEG preprotein conducting channel. SecDF uses the proton motive force (PMF) to complete protein translocation after the ATP-dependent function of SecA. This Elusimicrobium minutum (strain Pei191) protein is Protein translocase subunit SecD.